The chain runs to 705 residues: CAP-Gly domain-containing linker protein 4 (705 aa).

ANK repeat units lie at residues 65 to 101 (TSVS…NVND), 149 to 180 (TNMN…DVDA), and 186 to 215 (NFGT…NPAF). One can recognise a CAP-Gly 1 domain in the interval 303-345 (GTTEFASGQWAGIELDEPEGKNNGSVGKVQYFKCAPKYGIFAP). 2 disordered regions span residues 391–410 (MTSK…PGEE) and 431–479 (TSSL…ANNS). A compositionally biased stretch (polar residues) spans 441 to 452 (PKKQNAISSNKK). Over residues 455-479 (SKSPSLSSRASAGLNSSATSTANNS) the composition is skewed to low complexity. Positions 505-547 (GTTNFAPGYWYGIELEKPHGKNDGSVGGVQYFSCSPRYGIFAP) constitute a CAP-Gly 2 domain. A phosphoserine mark is found at Ser557 and Ser609. The CAP-Gly 3 domain maps to 644–686 (GPTDFASGIWLGLELRSAKGKNDGSVGDKRYFTCKPNHGVLVR).

This chain is CAP-Gly domain-containing linker protein 4 (CLIP4), found in Homo sapiens (Human).